The following is a 393-amino-acid chain: Pectate lyase A (393 aa).

Residues 1 to 32 form the signal peptide; it reads MMNKASGRSFTRSSKYLLATLIAGMMASGVSA. Ca(2+) contacts are provided by E174, D176, D216, and D220. R273 is an active-site residue. Residues C330 and C358 are joined by a disulfide bond.

It belongs to the polysaccharide lyase 1 family. PLADES subfamily. Ca(2+) is required as a cofactor.

The protein resides in the secreted. The catalysed reaction is Eliminative cleavage of (1-&gt;4)-alpha-D-galacturonan to give oligosaccharides with 4-deoxy-alpha-D-galact-4-enuronosyl groups at their non-reducing ends.. It functions in the pathway glycan metabolism; pectin degradation; 2-dehydro-3-deoxy-D-gluconate from pectin: step 2/5. In terms of biological role, involved in maceration and soft-rotting of plant tissue. This chain is Pectate lyase A (pelA), found in Dickeya chrysanthemi (Pectobacterium chrysanthemi).